We begin with the raw amino-acid sequence, 122 residues long: Large ribosomal subunit protein uL29B (122 aa).

Positions 10–69 form a coiled coil; the sequence is QLGIKQIEERAAEIKAELAALRQKKNSGDVGANDIKTAKKNLARALTVRREKILEELVEA.

Belongs to the universal ribosomal protein uL29 family. Component of the large ribosomal subunit.

The protein localises to the cytoplasm. In Encephalitozoon cuniculi (strain GB-M1) (Microsporidian parasite), this protein is Large ribosomal subunit protein uL29B (RPL35C).